A 419-amino-acid polypeptide reads, in one-letter code: S-adenosylmethionine synthase (419 aa).

His-15 is an ATP binding site. Asp-17 lines the Mg(2+) pocket. Glu-43 is a K(+) binding site. Residues Glu-56 and Gln-100 each coordinate L-methionine. A flexible loop region spans residues 100-110 (QSPDIAQGVNE). ATP contacts are provided by residues 171–173 (DGK), 248–249 (KF), Asp-257, 263–264 (RK), Ala-280, and Lys-284. Asp-257 contacts L-methionine. Lys-288 is a binding site for L-methionine.

Belongs to the AdoMet synthase family. Homotetramer; dimer of dimers. Mg(2+) is required as a cofactor. Requires K(+) as cofactor.

The protein resides in the cytoplasm. The catalysed reaction is L-methionine + ATP + H2O = S-adenosyl-L-methionine + phosphate + diphosphate. It functions in the pathway amino-acid biosynthesis; S-adenosyl-L-methionine biosynthesis; S-adenosyl-L-methionine from L-methionine: step 1/1. Functionally, catalyzes the formation of S-adenosylmethionine (AdoMet) from methionine and ATP. The overall synthetic reaction is composed of two sequential steps, AdoMet formation and the subsequent tripolyphosphate hydrolysis which occurs prior to release of AdoMet from the enzyme. The polypeptide is S-adenosylmethionine synthase (Prochlorococcus marinus (strain MIT 9313)).